Consider the following 428-residue polypeptide: Serine--tRNA ligase (428 aa).

231-233 (TAE) contributes to the L-serine binding site. 262–264 (RSE) serves as a coordination point for ATP. Glu285 lines the L-serine pocket. Position 349–352 (349–352 (EISS)) interacts with ATP. L-serine is bound at residue Ser385.

The protein belongs to the class-II aminoacyl-tRNA synthetase family. Type-1 seryl-tRNA synthetase subfamily. As to quaternary structure, homodimer. The tRNA molecule binds across the dimer.

The protein localises to the cytoplasm. It catalyses the reaction tRNA(Ser) + L-serine + ATP = L-seryl-tRNA(Ser) + AMP + diphosphate + H(+). It carries out the reaction tRNA(Sec) + L-serine + ATP = L-seryl-tRNA(Sec) + AMP + diphosphate + H(+). It functions in the pathway aminoacyl-tRNA biosynthesis; selenocysteinyl-tRNA(Sec) biosynthesis; L-seryl-tRNA(Sec) from L-serine and tRNA(Sec): step 1/1. In terms of biological role, catalyzes the attachment of serine to tRNA(Ser). Is also able to aminoacylate tRNA(Sec) with serine, to form the misacylated tRNA L-seryl-tRNA(Sec), which will be further converted into selenocysteinyl-tRNA(Sec). The chain is Serine--tRNA ligase from Staphylococcus aureus (strain MRSA252).